The sequence spans 345 residues: Phosphate acyltransferase (345 aa).

This sequence belongs to the PlsX family. As to quaternary structure, homodimer. Probably interacts with PlsY.

The protein localises to the cytoplasm. It carries out the reaction a fatty acyl-[ACP] + phosphate = an acyl phosphate + holo-[ACP]. The protein operates within lipid metabolism; phospholipid metabolism. In terms of biological role, catalyzes the reversible formation of acyl-phosphate (acyl-PO(4)) from acyl-[acyl-carrier-protein] (acyl-ACP). This enzyme utilizes acyl-ACP as fatty acyl donor, but not acyl-CoA. This chain is Phosphate acyltransferase, found in Nitratidesulfovibrio vulgaris (strain ATCC 29579 / DSM 644 / CCUG 34227 / NCIMB 8303 / VKM B-1760 / Hildenborough) (Desulfovibrio vulgaris).